The following is a 299-amino-acid chain: tRNA-cytidine(32) 2-sulfurtransferase (299 aa).

Residues serine 56–serine 61 carry the PP-loop motif motif. [4Fe-4S] cluster is bound by residues cysteine 131, cysteine 134, and cysteine 222.

It belongs to the TtcA family. In terms of assembly, homodimer. The cofactor is Mg(2+). Requires [4Fe-4S] cluster as cofactor.

It localises to the cytoplasm. It carries out the reaction cytidine(32) in tRNA + S-sulfanyl-L-cysteinyl-[cysteine desulfurase] + AH2 + ATP = 2-thiocytidine(32) in tRNA + L-cysteinyl-[cysteine desulfurase] + A + AMP + diphosphate + H(+). Its pathway is tRNA modification. Its function is as follows. Catalyzes the ATP-dependent 2-thiolation of cytidine in position 32 of tRNA, to form 2-thiocytidine (s(2)C32). The sulfur atoms are provided by the cysteine/cysteine desulfurase (IscS) system. The chain is tRNA-cytidine(32) 2-sulfurtransferase from Xylella fastidiosa (strain M12).